A 307-amino-acid chain; its full sequence is Peroxisomal protein PEX21 (307 aa).

Cys-4 participates in a covalent cross-link: Glycyl cysteine thioester (Cys-Gly) (interchain with G-Cter in ubiquitin). The interval 23-52 (VGRVGGFNRPSGGLGQSSAEQQLQARAGER) is disordered.

Belongs to the peroxin-21 family. In terms of assembly, interacts with PEX7. Monoubiquitinated at Cys-4; acts as a signal for PEX21 extraction and is required for proper export from peroxisomes and recycling.

The protein localises to the cytoplasm. Its subcellular location is the cytosol. It is found in the peroxisome. Mediates peroxisomal import of proteins containing a C-terminal PTS2-type peroxisomal targeting signal via its interaction with PEX7. Interaction with PEX7 only takes place when PEX7 is associated with cargo proteins containing a PTS2 peroxisomal targeting signal. PEX7 along with PTS2-containing cargo proteins are then translocated through the PEX13-PEX14 docking complex together with PEX21. The protein is Peroxisomal protein PEX21 (PEX21) of Eremothecium gossypii (strain ATCC 10895 / CBS 109.51 / FGSC 9923 / NRRL Y-1056) (Yeast).